The primary structure comprises 452 residues: La-related protein 1B (452 aa).

Residues 1–22 (MATTASSAANSASRFSIDSSIS) show a composition bias toward low complexity. The disordered stretch occupies residues 1–251 (MATTASSAAN…GFSHRNYSGR (251 aa)). Ala-2 is subject to N-acetylalanine. Residues 44 to 68 (LSLSQDDPFSAPSVSPPTGNNSSDY) show a composition bias toward polar residues. 4 stretches are compositionally biased toward low complexity: residues 99-117 (SWPA…SPSL), 136-163 (ATSN…VNNS), 171-185 (NNNT…NVSN), and 206-223 (SGNF…SYPR). The segment covering 225-236 (EGLHHGNRRNYE) has biased composition (basic and acidic residues). The segment covering 237 to 247 (HGNQSGFSHRN) has biased composition (polar residues). The HTH La-type RNA-binding domain occupies 328–417 (RNFDAILYNK…RGDWDKYLLP (90 aa)). Residues 419–452 (EPSRSGPAAGASNNASLVSQIESMTLSERSREGV) are disordered. Residues 422–434 (RSGPAAGASNNAS) show a composition bias toward low complexity. Over residues 435-445 (LVSQIESMTLS) the composition is skewed to polar residues.

Belongs to the LARP family.

It localises to the cytoplasm. Its function is as follows. Promotes leaf senescence. This chain is La-related protein 1B (LARP1B), found in Arabidopsis thaliana (Mouse-ear cress).